The following is a 122-amino-acid chain: Putative cryptic phosphonate transport system permease protein PhnE2 (122 aa).

One can recognise an ABC transmembrane type-1 domain in the interval 1 to 114 (MLALFIHTTG…VTVSLLDFLS (114 aa)). A run of 4 helical transmembrane segments spans residues 3–23 (ALFIHTTGVLSKLLSEAVEAI), 39–59 (LEEILYGVLPQVMPLLISYSL), 68–88 (SATVVGMVGAGGIGVTLWEAI), and 93–113 (FQQTCALMVLIIVTVSLLDFL).

This sequence belongs to the binding-protein-dependent transport system permease family. In terms of assembly, if the reading frame is restored, the complex is composed of two ATP-binding proteins (PhnC), two transmembrane proteins (PhnE) and a solute-binding protein (PhnD).

Its subcellular location is the cell inner membrane. In terms of biological role, C-terminal fragment of the PhnE protein, part of a phosphonate usage operon that is cryptic in K12 strains. Growth of K12 strains on phosphonate can be observed when it is used as the sole phosphorus source after a 60 hour lag period, suggesting the operon is activated. An intact PhnE in strain B is (AC A0A140NFA3). Part of the binding-protein-dependent transport system for phosphonates; probably responsible for the translocation of the substrate across the membrane. The chain is Putative cryptic phosphonate transport system permease protein PhnE2 (phnE) from Escherichia coli (strain K12).